The primary structure comprises 98 residues: NADH-ubiquinone oxidoreductase chain 4L (98 aa).

Helical transmembrane passes span 1–21 (MASI…GVLI), 28–48 (STLL…TLLI), and 61–81 (LILL…LVTI).

This sequence belongs to the complex I subunit 4L family. In terms of assembly, core subunit of respiratory chain NADH dehydrogenase (Complex I) which is composed of 45 different subunits.

The protein resides in the mitochondrion inner membrane. The enzyme catalyses a ubiquinone + NADH + 5 H(+)(in) = a ubiquinol + NAD(+) + 4 H(+)(out). Its function is as follows. Core subunit of the mitochondrial membrane respiratory chain NADH dehydrogenase (Complex I) which catalyzes electron transfer from NADH through the respiratory chain, using ubiquinone as an electron acceptor. Part of the enzyme membrane arm which is embedded in the lipid bilayer and involved in proton translocation. This is NADH-ubiquinone oxidoreductase chain 4L (MT-ND4L) from Thylamys elegans (Elegant fat-tailed mouse opossum).